We begin with the raw amino-acid sequence, 120 residues long: Large ribosomal subunit protein uL18 (120 aa).

This sequence belongs to the universal ribosomal protein uL18 family. In terms of assembly, part of the 50S ribosomal subunit; part of the 5S rRNA/L5/L18/L25 subcomplex. Contacts the 5S and 23S rRNAs.

This is one of the proteins that bind and probably mediate the attachment of the 5S RNA into the large ribosomal subunit, where it forms part of the central protuberance. This Afipia carboxidovorans (strain ATCC 49405 / DSM 1227 / KCTC 32145 / OM5) (Oligotropha carboxidovorans) protein is Large ribosomal subunit protein uL18.